Here is a 921-residue protein sequence, read N- to C-terminus: Isoleucine--tRNA ligase (921 aa).

The short motif at 57 to 67 is the 'HIGH' region element; the sequence is PYANGDIHMGH. Glutamate 552 is a binding site for L-isoleucyl-5'-AMP. Positions 593–597 match the 'KMSKS' region motif; sequence KMSKS. An ATP-binding site is contributed by lysine 596. Cysteine 888, cysteine 891, cysteine 908, and cysteine 911 together coordinate Zn(2+).

It belongs to the class-I aminoacyl-tRNA synthetase family. IleS type 1 subfamily. As to quaternary structure, monomer. The cofactor is Zn(2+).

Its subcellular location is the cytoplasm. It carries out the reaction tRNA(Ile) + L-isoleucine + ATP = L-isoleucyl-tRNA(Ile) + AMP + diphosphate. In terms of biological role, catalyzes the attachment of isoleucine to tRNA(Ile). As IleRS can inadvertently accommodate and process structurally similar amino acids such as valine, to avoid such errors it has two additional distinct tRNA(Ile)-dependent editing activities. One activity is designated as 'pretransfer' editing and involves the hydrolysis of activated Val-AMP. The other activity is designated 'posttransfer' editing and involves deacylation of mischarged Val-tRNA(Ile). The chain is Isoleucine--tRNA ligase from Bacillus cereus (strain AH820).